A 211-amino-acid polypeptide reads, in one-letter code: Large ribosomal subunit protein bL17c (211 aa).

A chloroplast-targeting transit peptide spans 1 to 95; the sequence is MAIPMSMAMA…IVDGGGRIYA (95 aa).

The protein belongs to the bacterial ribosomal protein bL17 family. Part of the 50S ribosomal subunit.

Its subcellular location is the plastid. The protein resides in the chloroplast. Functionally, this protein binds directly to 23S ribosomal RNA. This is Large ribosomal subunit protein bL17c (RPL17) from Arabidopsis thaliana (Mouse-ear cress).